The sequence spans 103 residues: U-scoloptoxin(24)-Er1a (103 aa).

A signal peptide spans 1 to 23 (MVKSLHCLIGIVLFLAILNAGNG).

This sequence belongs to the scoloptoxin-24 family. Contains 1 disulfide bond. As to expression, expressed by the venom gland.

It is found in the secreted. This Ethmostigmus rubripes (Giant centipede) protein is U-scoloptoxin(24)-Er1a.